Here is a 119-residue protein sequence, read N- to C-terminus: Large ribosomal subunit protein bL20 (119 aa).

This sequence belongs to the bacterial ribosomal protein bL20 family.

Its function is as follows. Binds directly to 23S ribosomal RNA and is necessary for the in vitro assembly process of the 50S ribosomal subunit. It is not involved in the protein synthesizing functions of that subunit. This chain is Large ribosomal subunit protein bL20, found in Halalkalibacterium halodurans (strain ATCC BAA-125 / DSM 18197 / FERM 7344 / JCM 9153 / C-125) (Bacillus halodurans).